A 409-amino-acid chain; its full sequence is Dual-specificity RNA methyltransferase RlmN (409 aa).

E126 functions as the Proton acceptor in the catalytic mechanism. Residues 132 to 373 (EEGRGTLCLS…NQAGYASPIR (242 aa)) enclose the Radical SAM core domain. C139 and C384 are joined by a disulfide. [4Fe-4S] cluster-binding residues include C146, C150, and C153. S-adenosyl-L-methionine contacts are provided by residues 210-211 (GE), S242, 264-266 (SLH), and N341. C384 serves as the catalytic S-methylcysteine intermediate.

This sequence belongs to the radical SAM superfamily. RlmN family. Requires [4Fe-4S] cluster as cofactor.

The protein localises to the cytoplasm. The enzyme catalyses adenosine(2503) in 23S rRNA + 2 reduced [2Fe-2S]-[ferredoxin] + 2 S-adenosyl-L-methionine = 2-methyladenosine(2503) in 23S rRNA + 5'-deoxyadenosine + L-methionine + 2 oxidized [2Fe-2S]-[ferredoxin] + S-adenosyl-L-homocysteine. It carries out the reaction adenosine(37) in tRNA + 2 reduced [2Fe-2S]-[ferredoxin] + 2 S-adenosyl-L-methionine = 2-methyladenosine(37) in tRNA + 5'-deoxyadenosine + L-methionine + 2 oxidized [2Fe-2S]-[ferredoxin] + S-adenosyl-L-homocysteine. Specifically methylates position 2 of adenine 2503 in 23S rRNA and position 2 of adenine 37 in tRNAs. m2A2503 modification seems to play a crucial role in the proofreading step occurring at the peptidyl transferase center and thus would serve to optimize ribosomal fidelity. In Bartonella quintana (strain Toulouse) (Rochalimaea quintana), this protein is Dual-specificity RNA methyltransferase RlmN.